The chain runs to 218 residues: Kappa-scoloptoxin(11)-Ssd1b (218 aa).

The signal sequence occupies residues 1–16; it reads MFYSHLLFFTFTFACS. Residues 17 to 25 constitute a propeptide that is removed on maturation; that stretch reads SSLNRKTKR.

Post-translationally, contains 8 disulfide bonds. In terms of tissue distribution, expressed by the venom gland.

It localises to the secreted. Functionally, voltage-gated potassium channel inhibitor. In Scolopendra dehaani (Thai centipede), this protein is Kappa-scoloptoxin(11)-Ssd1b.